The chain runs to 243 residues: Glycerophosphodiester phosphodiesterase (243 aa).

Positions 3–239 (TLVIAHRGDS…DDPETLINLV (237 aa)) constitute a GP-PDE domain. The Proton acceptor role is filled by His8. Positions 35 and 37 each coordinate Ca(2+). His50 serves as the catalytic Proton donor. Residue Glu110 participates in Ca(2+) binding.

It belongs to the glycerophosphoryl diester phosphodiesterase family. As to quaternary structure, homodimer. The cofactor is Mg(2+). It depends on Ca(2+) as a cofactor.

The enzyme catalyses a sn-glycero-3-phosphodiester + H2O = an alcohol + sn-glycerol 3-phosphate + H(+). It catalyses the reaction sn-glycerol 3-phosphocholine + H2O = sn-glycerol 3-phosphate + choline + H(+). Its activity is regulated as follows. Inhibited by EDTA. Functionally, glycerophosphodiester phosphodiesterase hydrolyzes glycerophosphodiesters into glycerol-3-phosphate (G3P) and the corresponding alcohol. Can use glycerophosphocholine. The sequence is that of Glycerophosphodiester phosphodiesterase from Caldanaerobacter subterraneus subsp. tengcongensis (strain DSM 15242 / JCM 11007 / NBRC 100824 / MB4) (Thermoanaerobacter tengcongensis).